A 792-amino-acid polypeptide reads, in one-letter code: Zinc finger protein 606 (792 aa).

Positions 62-133 (VTFKDVAVDF…EQACPQRTCP (72 aa)) constitute a KRAB domain. The segment at 289–311 (FKCTDAVKSFNHIIHFGDHKGIH) adopts a C2H2-type 1; degenerate zinc-finger fold. Residues 317 to 344 (YEYKECHQIFNQSPSFNEHPRLHVGENQ) form a C2H2-type 2; degenerate zinc finger. A C2H2-type 3; degenerate zinc finger spans residues 400-422 (YDYNECGTSFIWSSYLIQHKKTH). 13 C2H2-type zinc fingers span residues 428-450 (YECDKCGKVFRNRSALTKHERTH), 456-478 (YECNKCGKAFSWNSHLIVHKRIH), 484-506 (YVCNECGKSFNWNSHLIGHQRTH), 512-534 (FECTECGKSFSWSSHLIAHMRMH), 540-562 (FKCDECEKAFRDYSALSKHERTH), 568-590 (YKCTECGKSFSWSSHLIAHQRTH), 596-618 (YNCQECGKAFRERSALTKHEIIH), 624-646 (YECNKCGKSCSQMAHLVRHQRTH), 652-674 (YECNKCGKSFSQSCHLVAHRRIH), 680-702 (YKCNQCERSFNCSSHLIAHRRTH), 708-730 (YRCNECGKAFNESSSLIVHLRNH), 736-758 (YKCNHCEKAFCKNSSLIIHQRMH), and 764-786 (FICSECGKAFSGHSALLQHQRNH).

The protein belongs to the krueppel C2H2-type zinc-finger protein family. Widely expressed in adult and fetal tissues.

Its subcellular location is the nucleus. May act as a transcriptional repressor. In Homo sapiens (Human), this protein is Zinc finger protein 606 (ZNF606).